Here is a 440-residue protein sequence, read N- to C-terminus: COP9 signalosome complex subunit 4 (440 aa).

Residues 216–386 (SNRQFLAASQ…RIIYFESGLE (171 aa)) form the PCI domain.

The protein belongs to the CSN4 family. Component of the COP9 signalosome (CSN) complex.

It localises to the cytoplasm. The protein localises to the nucleus. Functionally, component of the COP9 signalosome (CSN) complex that acts as an regulator of the ubiquitin (Ubl) conjugation pathway by mediating the deneddylation of the cullin subunit of SCF-type E3 ubiquitin-protein ligase complexes. The CSN complex is involved in the regulation of the circadian clock through its control of the stability of the SCF(FWD1) complex. This chain is COP9 signalosome complex subunit 4 (csn-4), found in Neurospora crassa (strain ATCC 24698 / 74-OR23-1A / CBS 708.71 / DSM 1257 / FGSC 987).